The sequence spans 172 residues: RNA silencing suppressor p19 (172 aa).

Disordered stretches follow at residues 1–38 (MEGA…ESPG) and 152–172 (VEGN…KESE). Composition is skewed to basic and acidic residues over residues 9–20 (DAREQANSERWD) and 159–172 (GRPE…KESE).

Belongs to the tombusvirus protein p19 family. As to quaternary structure, homodimer.

Functionally, viral suppressor of RNA silencing which binds specifically to silencing RNAs (siRNAs). Acts as a molecular caliper to specifically select siRNAs based on the length of the duplex region of the RNA. The protein is RNA silencing suppressor p19 of Havel river virus (HaRV).